We begin with the raw amino-acid sequence, 611 residues long: Glutamine--fructose-6-phosphate aminotransferase [isomerizing] (611 aa).

The Nucleophile; for GATase activity role is filled by Cys-2. Residues 2–219 (CGIVGAVAER…EGDIAEIRRD (218 aa)) enclose the Glutamine amidotransferase type-2 domain. SIS domains lie at 287–427 (AADL…VRGT) and 460–601 (IAEL…VDQP). Lys-606 serves as the catalytic For Fru-6P isomerization activity.

In terms of assembly, homodimer.

The protein localises to the cytoplasm. It catalyses the reaction D-fructose 6-phosphate + L-glutamine = D-glucosamine 6-phosphate + L-glutamate. Catalyzes the first step in hexosamine metabolism, converting fructose-6P into glucosamine-6P using glutamine as a nitrogen source. The polypeptide is Glutamine--fructose-6-phosphate aminotransferase [isomerizing] (Pseudomonas putida (strain ATCC 47054 / DSM 6125 / CFBP 8728 / NCIMB 11950 / KT2440)).